The primary structure comprises 252 residues: 3-dehydroquinate dehydratase (252 aa).

Residues Ser21, 46–48 (EWR), and Arg82 contribute to the 3-dehydroquinate site. His143 functions as the Proton donor/acceptor in the catalytic mechanism. The active-site Schiff-base intermediate with substrate is Lys170. Residues Arg213, Ser232, and Gln236 each contribute to the 3-dehydroquinate site.

The protein belongs to the type-I 3-dehydroquinase family. In terms of assembly, homodimer.

The enzyme catalyses 3-dehydroquinate = 3-dehydroshikimate + H2O. It participates in metabolic intermediate biosynthesis; chorismate biosynthesis; chorismate from D-erythrose 4-phosphate and phosphoenolpyruvate: step 3/7. Its function is as follows. Involved in the third step of the chorismate pathway, which leads to the biosynthesis of aromatic amino acids. Catalyzes the cis-dehydration of 3-dehydroquinate (DHQ) and introduces the first double bond of the aromatic ring to yield 3-dehydroshikimate. This chain is 3-dehydroquinate dehydratase, found in Salmonella dublin (strain CT_02021853).